The chain runs to 1597 residues: Protein STU1 (1597 aa).

Disordered regions lie at residues 220–265, 519–958, 1005–1154, and 1307–1332; these read GNSS…PSSS, DKVN…RPIH, DAEA…ELNT, and SQRP…SSLV. Residues 535–552 are compositionally biased toward basic and acidic residues; that stretch reads APRESLKEVMRRSRESSV. Low complexity predominate over residues 577 to 605; it reads SSGLVGRSLSGSNLTDRSNRLSSTSTSSR. 2 stretches are compositionally biased toward polar residues: residues 610–622 and 632–645; these read AVSD…QMTR and PSLT…SLTR. Composition is skewed to basic and acidic residues over residues 660–673 and 694–708; these read GSRE…DQNR and ESSR…DPSR. Residues 709–726 show a composition bias toward polar residues; that stretch reads ESSLAPSVHSSTAISRES. Over residues 765 to 781 the composition is skewed to low complexity; it reads EETMNEVTTAEATATTA. Polar residues-rich tracts occupy residues 791-801 and 808-822; these read PRESTPPNSSP and PATQ…TGKS. A compositionally biased stretch (basic and acidic residues) spans 832–846; sequence ELSRDLNGESKHLKE. Composition is skewed to polar residues over residues 918–933, 1013–1025, and 1036–1045; these read DSQS…QSEP, TEQT…SDTA, and NSEQGPSTEP. Residues 1081–1091 are compositionally biased toward basic and acidic residues; it reads ASDEIETDHTK. Acidic residues predominate over residues 1108–1119; the sequence is EPMEICDSDNDA. The span at 1122–1139 shows a compositional bias: polar residues; sequence NGTNPDTKCQDQQDSTTP. Residues 1537-1573 form an HEAT repeat; sequence PSYETQLLALITELISDPDPLVRRVTVGLVVRVLRVS.

This sequence belongs to the CLASP family. As to quaternary structure, interacts with microtubules.

The protein resides in the cytoplasm. It localises to the cytoskeleton. It is found in the nucleus. The protein localises to the spindle. Functionally, microtubule binding protein that promotes the stabilization of dynamic microtubules. Required for mitotic spindle formation. This is Protein STU1 (STU1) from Yarrowia lipolytica (strain CLIB 122 / E 150) (Yeast).